A 598-amino-acid polypeptide reads, in one-letter code: Probable translation initiation factor IF-2 (598 aa).

Residues 3–223 (LRCPIVSVLG…ISGLAQRFME (221 aa)) form the tr-type G domain. A G1 region spans residues 12 to 19 (GHVDHGKT). GTP is bound at residue 12 to 19 (GHVDHGKT). Residues 37-41 (GITQH) are G2. Residues 76–79 (DTPG) form a G3 region. GTP contacts are provided by residues 76-80 (DTPGH) and 130-133 (NKID). Positions 130–133 (NKID) are G4. Positions 200–202 (SAM) are G5.

This sequence belongs to the TRAFAC class translation factor GTPase superfamily. Classic translation factor GTPase family. IF-2 subfamily.

Its function is as follows. Function in general translation initiation by promoting the binding of the formylmethionine-tRNA to ribosomes. Seems to function along with eIF-2. This chain is Probable translation initiation factor IF-2, found in Methanococcus aeolicus (strain ATCC BAA-1280 / DSM 17508 / OCM 812 / Nankai-3).